A 222-amino-acid polypeptide reads, in one-letter code: Cyclin-U2-1 (222 aa).

The protein belongs to the cyclin family. Cyclin U/P subfamily. As to quaternary structure, interacts with CDKA-1. As to expression, expressed in roots, stems and flowers. Expressed in the shoot apex, leaf primordia and young leaves.

In Arabidopsis thaliana (Mouse-ear cress), this protein is Cyclin-U2-1 (CYCU2-1).